Reading from the N-terminus, the 181-residue chain is Oligoribonuclease (181 aa).

The Exonuclease domain occupies 8 to 171 (LIWIDLEMTG…QDIQESIAEL (164 aa)). Tyrosine 129 is an active-site residue.

The protein belongs to the oligoribonuclease family.

The protein resides in the cytoplasm. Functionally, 3'-to-5' exoribonuclease specific for small oligoribonucleotides. The chain is Oligoribonuclease from Shewanella sp. (strain ANA-3).